A 287-amino-acid polypeptide reads, in one-letter code: Undecaprenyl-diphosphatase (287 aa).

6 helical membrane-spanning segments follow: residues 50 to 70 (PGVSVTAAIQLGSIVAVIAYF), 99 to 119 (IAMAVGTLPILAVGLAIKLFW), 128 to 148 (LRSVPSIAVVSIVMALLLAVA), 206 to 226 (FLLGIPAITIAGIVELKDALA), 231 to 251 (AGPLPLVIGILAATVVSWLAI), and 263 to 283 (TWLFVAYRLLFGVGLLAWWSI).

This sequence belongs to the UppP family.

Its subcellular location is the cell inner membrane. The enzyme catalyses di-trans,octa-cis-undecaprenyl diphosphate + H2O = di-trans,octa-cis-undecaprenyl phosphate + phosphate + H(+). In terms of biological role, catalyzes the dephosphorylation of undecaprenyl diphosphate (UPP). Confers resistance to bacitracin. This is Undecaprenyl-diphosphatase from Parasynechococcus marenigrum (strain WH8102).